Here is a 56-residue protein sequence, read N- to C-terminus: Large ribosomal subunit protein bL33 (56 aa).

The protein belongs to the bacterial ribosomal protein bL33 family.

This chain is Large ribosomal subunit protein bL33, found in Tropheryma whipplei (strain TW08/27) (Whipple's bacillus).